We begin with the raw amino-acid sequence, 291 residues long: Putative heme-binding peroxidase (291 aa).

The Proton acceptor role is filled by His61. Heme b is bound at residue His185. Trp201 acts as the Tryptophan radical intermediate in catalysis.

It belongs to the peroxidase family. Cytochrome c peroxidase subfamily. Requires heme b as cofactor.

Its function is as follows. Destroys radicals which are normally produced within the cells and which are toxic to biological systems. The polypeptide is Putative heme-binding peroxidase (CCP2) (Candida albicans (strain SC5314 / ATCC MYA-2876) (Yeast)).